The following is a 579-amino-acid chain: Arginine--tRNA ligase (579 aa).

The 'HIGH' region signature appears at 123-133; the sequence is PNLAKEMHVGH.

Belongs to the class-I aminoacyl-tRNA synthetase family. In terms of assembly, monomer.

The protein resides in the cytoplasm. It catalyses the reaction tRNA(Arg) + L-arginine + ATP = L-arginyl-tRNA(Arg) + AMP + diphosphate. This Cellvibrio japonicus (strain Ueda107) (Pseudomonas fluorescens subsp. cellulosa) protein is Arginine--tRNA ligase.